We begin with the raw amino-acid sequence, 462 residues long: Cysteine--tRNA ligase (462 aa).

Cys24 lines the Zn(2+) pocket. Residues Pro26–His36 carry the 'HIGH' region motif. Cys199, His224, and Glu228 together coordinate Zn(2+). The 'KMSKS' region signature appears at Lys256–Ser260. Residue Lys259 coordinates ATP.

The protein belongs to the class-I aminoacyl-tRNA synthetase family. As to quaternary structure, monomer. Requires Zn(2+) as cofactor.

Its subcellular location is the cytoplasm. It carries out the reaction tRNA(Cys) + L-cysteine + ATP = L-cysteinyl-tRNA(Cys) + AMP + diphosphate. The protein is Cysteine--tRNA ligase of Campylobacter jejuni subsp. jejuni serotype O:6 (strain 81116 / NCTC 11828).